The following is a 288-amino-acid chain: Diaminopimelate epimerase (288 aa).

Positions 17, 47, and 67 each coordinate substrate. Cysteine 76 serves as the catalytic Proton donor. Residues 77 to 78 (GN), asparagine 163, asparagine 196, and 214 to 215 (ER) contribute to the substrate site. The active-site Proton acceptor is cysteine 223. 224 to 225 (GS) contacts substrate.

The protein belongs to the diaminopimelate epimerase family. Homodimer.

It is found in the cytoplasm. It catalyses the reaction (2S,6S)-2,6-diaminopimelate = meso-2,6-diaminopimelate. It functions in the pathway amino-acid biosynthesis; L-lysine biosynthesis via DAP pathway; DL-2,6-diaminopimelate from LL-2,6-diaminopimelate: step 1/1. In terms of biological role, catalyzes the stereoinversion of LL-2,6-diaminopimelate (L,L-DAP) to meso-diaminopimelate (meso-DAP), a precursor of L-lysine and an essential component of the bacterial peptidoglycan. The polypeptide is Diaminopimelate epimerase (Rhodopseudomonas palustris (strain BisB18)).